A 213-amino-acid chain; its full sequence is Thymidine kinase (213 aa).

ATP contacts are provided by residues 22–29 and 94–97; these read GSMFSGKT and DEAQ. The active-site Proton acceptor is the Glu-95. Zn(2+) contacts are provided by Cys-151, Cys-154, Cys-183, and Cys-186. A disordered region spans residues 185–213; the sequence is RCFQPPRPTSTSSLKAPAPAATAPRPELP. Residues 193–213 are compositionally biased toward low complexity; that stretch reads TSTSSLKAPAPAATAPRPELP.

The protein belongs to the thymidine kinase family. In terms of assembly, homotetramer.

It localises to the cytoplasm. The catalysed reaction is thymidine + ATP = dTMP + ADP + H(+). This Rhodothermus sp. (strain ITI 518) protein is Thymidine kinase.